An 82-amino-acid polypeptide reads, in one-letter code: MYLQMNFFPCPSPSFHLGESVMVVVVDRGTGRCTHRHGRRCITVIQSAGNPVHATDYEAYWLRERLMGMRIGRLVILYTSGK.

This is an uncharacterized protein from Ictaluridae (bullhead catfishes).